The chain runs to 467 residues: Bifunctional protein GlmU (467 aa).

Positions 1 to 229 are pyrophosphorylase; it reads MEKNTIILAA…FSESMGVNDR (229 aa). Residues 8 to 11, lysine 22, glutamine 72, 77 to 78, 100 to 102, glycine 139, glutamate 154, asparagine 169, and asparagine 227 contribute to the UDP-N-acetyl-alpha-D-glucosamine site; these read LAAG, GT, and SGD. A Mg(2+)-binding site is contributed by aspartate 102. Residue asparagine 227 participates in Mg(2+) binding. The segment at 230 to 250 is linker; sequence LALSKATKVMQRRINEEHMVN. Residues 251–467 form an N-acetyltransferase region; it reads GVTIIDPENT…ALKAEEENNK (217 aa). Residues arginine 332 and lysine 350 each contribute to the UDP-N-acetyl-alpha-D-glucosamine site. Residue histidine 362 is the Proton acceptor of the active site. 2 residues coordinate UDP-N-acetyl-alpha-D-glucosamine: tyrosine 365 and asparagine 376. Residues 385 to 386, serine 404, alanine 422, and arginine 439 contribute to the acetyl-CoA site; that span reads NY.

It in the N-terminal section; belongs to the N-acetylglucosamine-1-phosphate uridyltransferase family. In the C-terminal section; belongs to the transferase hexapeptide repeat family. As to quaternary structure, homotrimer. Mg(2+) is required as a cofactor.

The protein resides in the cytoplasm. The catalysed reaction is alpha-D-glucosamine 1-phosphate + acetyl-CoA = N-acetyl-alpha-D-glucosamine 1-phosphate + CoA + H(+). It carries out the reaction N-acetyl-alpha-D-glucosamine 1-phosphate + UTP + H(+) = UDP-N-acetyl-alpha-D-glucosamine + diphosphate. It functions in the pathway nucleotide-sugar biosynthesis; UDP-N-acetyl-alpha-D-glucosamine biosynthesis; N-acetyl-alpha-D-glucosamine 1-phosphate from alpha-D-glucosamine 6-phosphate (route II): step 2/2. Its pathway is nucleotide-sugar biosynthesis; UDP-N-acetyl-alpha-D-glucosamine biosynthesis; UDP-N-acetyl-alpha-D-glucosamine from N-acetyl-alpha-D-glucosamine 1-phosphate: step 1/1. It participates in bacterial outer membrane biogenesis; LPS lipid A biosynthesis. In terms of biological role, catalyzes the last two sequential reactions in the de novo biosynthetic pathway for UDP-N-acetylglucosamine (UDP-GlcNAc). The C-terminal domain catalyzes the transfer of acetyl group from acetyl coenzyme A to glucosamine-1-phosphate (GlcN-1-P) to produce N-acetylglucosamine-1-phosphate (GlcNAc-1-P), which is converted into UDP-GlcNAc by the transfer of uridine 5-monophosphate (from uridine 5-triphosphate), a reaction catalyzed by the N-terminal domain. This Pediococcus pentosaceus (strain ATCC 25745 / CCUG 21536 / LMG 10740 / 183-1w) protein is Bifunctional protein GlmU.